Here is a 340-residue protein sequence, read N- to C-terminus: MITLQNVVKEYTSRNNKVLAVDHVDLEIEQGEIFGVVGYSGAGKSTLIRMFNGLELPTEGSVEVDNLLISQIRGSKLRKARQQIGMIFQHFNLLWSRTVAENIAFPLEIAGVRGEKRRFRVNELIRLVGLEGKENAYPAELSGGQKQRVGIARALANNPKVLLCDEATSALDPQTTDEVLELLLDINKRLNLTIIVITHEMHVIRKICNRVAVMENGKVAELGDVLDVFRHPKEKVTQRFVRQVTDSDETEELIHLLLDNYAEGKIVKLLFMSENATQPVISQVAKENDVMLNVLHGNLTQTQNGAYGTLYVQVLGTEEAIEASLTQLRQLKVETEVLER.

Residues 2-241 enclose the ABC transporter domain; the sequence is ITLQNVVKEY…PKEKVTQRFV (240 aa). 38-45 serves as a coordination point for ATP; that stretch reads GYSGAGKS.

The protein belongs to the ABC transporter superfamily. Methionine importer (TC 3.A.1.24) family. As to quaternary structure, the complex is composed of two ATP-binding proteins (MetN), two transmembrane proteins (MetI) and a solute-binding protein (MetQ).

The protein resides in the cell membrane. The catalysed reaction is L-methionine(out) + ATP + H2O = L-methionine(in) + ADP + phosphate + H(+). It catalyses the reaction D-methionine(out) + ATP + H2O = D-methionine(in) + ADP + phosphate + H(+). In terms of biological role, part of the ABC transporter complex MetNIQ involved in methionine import. Responsible for energy coupling to the transport system. The protein is Methionine import ATP-binding protein MetN 2 of Listeria innocua serovar 6a (strain ATCC BAA-680 / CLIP 11262).